The primary structure comprises 305 residues: MYNGILPVYKERGLTSHDVVFKLRKILKTKKIGHTGTLDPEVAGVLPVCIGNATRVSDYVMDMGKAYEATVSIGRSTTTEDQTGDTLETKGVHSADFNKDDIDRLLENFKGVIEQIPPMYSSVKVNGKKLYEYARNNETVERPKRKVNIKDIGRISELDFKENECHFKIRVICGKGTYIRTLATDIGVKLGFPAHMSKLTRIESGGFVLKDSLTLEQIKELHEQDSLQNKLFPLEYGLKGLPSIKIKDSHIKKRILNGQKFNKNEFDNKIKDQIVFIDDDSEKVLAIYMVHPTKESEIKPKKVFN.

The active-site Nucleophile is the Asp39.

Belongs to the pseudouridine synthase TruB family. Type 1 subfamily.

The enzyme catalyses uridine(55) in tRNA = pseudouridine(55) in tRNA. Functionally, responsible for synthesis of pseudouridine from uracil-55 in the psi GC loop of transfer RNAs. This chain is tRNA pseudouridine synthase B, found in Staphylococcus aureus (strain Mu50 / ATCC 700699).